A 135-amino-acid polypeptide reads, in one-letter code: Galectin-1 (135 aa).

Ala-2 is modified (N-acetylalanine). In terms of domain architecture, Galectin spans 4-135 (GLVASNLNLK…DFKIKCVAFD (132 aa)). Lys-13 and Lys-29 each carry N6-acetyllysine. The residue at position 30 (Ser-30) is a Phosphoserine. Residues 45–49 (HFNPR), His-53, Asn-62, and 69–72 (WGAE) each bind a beta-D-galactoside. N6-acetyllysine; alternate is present on Lys-108. Lys-108 carries the post-translational modification N6-succinyllysine; alternate. Lys-128 is modified (N6-acetyllysine).

As to quaternary structure, homodimer. Binds LGALS3BP. Interacts with CD2, CD3, CD4, CD6, CD7, CD43, ALCAM and CD45. Interacts with laminin (via poly-N-acetyllactosamine). Interacts with SUSD2. Interacts with cargo receptor TMED10; the interaction mediates the translocation from the cytoplasm into the ERGIC (endoplasmic reticulum-Golgi intermediate compartment) and thereby secretion. The N-terminus is blocked.

The protein localises to the secreted. Its subcellular location is the extracellular space. It is found in the extracellular matrix. The protein resides in the cytoplasm. Its function is as follows. Lectin that binds beta-galactoside and a wide array of complex carbohydrates. Plays a role in regulating apoptosis, cell proliferation and cell differentiation. Inhibits CD45 protein phosphatase activity and therefore the dephosphorylation of Lyn kinase. Strong inducer of T-cell apoptosis. The polypeptide is Galectin-1 (Bubalus bubalis (Domestic water buffalo)).